A 65-amino-acid chain; its full sequence is Large ribosomal subunit protein bL35 (65 aa).

Residues 1–10 (MPKMKSKSSA) are compositionally biased toward basic residues. The interval 1–21 (MPKMKSKSSAKMRFSVRAGGT) is disordered.

This sequence belongs to the bacterial ribosomal protein bL35 family.

The sequence is that of Large ribosomal subunit protein bL35 from Polynucleobacter necessarius subsp. necessarius (strain STIR1).